A 714-amino-acid polypeptide reads, in one-letter code: Polynucleotide 5'-hydroxyl-kinase NOL9 (714 aa).

A2 carries the N-acetylalanine modification. The Nucleolar localization signal motif lies at 31–47; the sequence is RRGRRRFGVLTRVELRR. Residues 80 to 133 form a disordered region; that stretch reads ARSRPAPRSPPTPSVPPAPCTASATCSLLNPRNHSTPQSRAGRPVRKVSPNVTQ. Positions 86 to 98 are enriched in pro residues; that stretch reads PRSPPTPSVPPAP. The segment covering 107-118 has biased composition (polar residues); that stretch reads LLNPRNHSTPQS. S128 is subject to Phosphoserine. Residue 322 to 329 participates in ATP binding; that stretch reads GACDIGKS. An interaction with LAS1L region spans residues 495-714; it reads FTYEEKESSP…PRHKLRQRRK (220 aa). K500 is covalently cross-linked (Glycyl lysine isopeptide (Lys-Gly) (interchain with G-Cter in SUMO2)). S502 is modified (phosphoserine).

It belongs to the Clp1 family. NOL9/GRC3 subfamily. Interacts with PELP1, WDR18 and SENP3. Interacts with LAS1L to form an ITS2 pre-rRNA endonuclease-kinase complex.

Its subcellular location is the nucleus. It localises to the nucleolus. It catalyses the reaction a 5'-end dephospho-2'-deoxyribonucleoside-DNA + ATP = a 5'-end 5'-phospho-2'-deoxyribonucleoside-DNA + ADP + H(+). It carries out the reaction a 5'-end dephospho-ribonucleoside-RNA + ATP = a 5'-end 5'-phospho-ribonucleoside-RNA + ADP + H(+). In terms of biological role, polynucleotide kinase that can phosphorylate the 5'-hydroxyl groups of single-stranded and double-stranded RNA and DNA substrates. Involved in rRNA processing and its kinase activity is required for the processing of the 32S precursor into 5.8S and 28S rRNAs, more specifically for the generation of the major 5.8S(S) form. Required for the efficient pre-rRNA processing of internal transcribed spacer 2 (ITS2). Associates with LAS1L to form an ITS2 pre-rRNA endonuclease-kinase complex and is responsible for the transport of this complex into the nucleolus. The sequence is that of Polynucleotide 5'-hydroxyl-kinase NOL9 from Mus musculus (Mouse).